The primary structure comprises 110 residues: PHD finger-like domain-containing protein 5A (110 aa).

Residue alanine 2 is modified to N-acetylalanine. Lysine 3 is subject to N6-acetyllysine. Residues cysteine 11, cysteine 23, cysteine 26, cysteine 30, cysteine 33, cysteine 46, cysteine 49, cysteine 58, cysteine 61, cysteine 72, and cysteine 75 each coordinate Zn(2+). The tract at residues 35–51 is interaction with SF3B1 and SF3B3; it reads SYVRPCTLVRICDECNY. An interaction with SF3B3 region spans residues 79–82; the sequence is EKDR. Cysteine 85 is a Zn(2+) binding site. Serine 94 carries the post-translational modification Phosphoserine.

Belongs to the PHF5 family. In terms of assembly, component of the 17S U2 SnRNP complex, a ribonucleoprotein complex that contains small nuclear RNA (snRNA) U2 and a number of specific proteins. Part of the SF3B subcomplex of the 17S U2 SnRNP complex. SF3B associates with the splicing subcomplex SF3A and a 12S RNA unit to form the U2 small nuclear ribonucleoproteins complex (U2 snRNP). Within the SF3B complex interacts directly with SF3B1 and SF3B3. Component of the minor spliceosome, which splices U12-type introns. Within this complex, interacts with CRIPT. Interacts (via N-terminus) with U2AF1 and SRSF5; acts to bridge the two. Interacts (via C-terminus) with EP400 and DDX1; acts to bridge the two. Interacts with the PAF1 complex (PAF1C) composed of CDC73, PAF1, LEO1, CTR9, RTF1 and SKIC8. Within the PAF1C interacts directly with CDC73 and SKIC8. Interacts with RNA polymerase II. In terms of tissue distribution, expressed in primary spermatocytes (at protein level). Ubiquitously expressed in pre- and postnatal tissues. Highly expressed in pluripotent embryonic stem cells (ESCs) (at protein level) and induced pluripotent stem cells (iPSCs).

The protein localises to the nucleus. The protein resides in the nucleus speckle. Its function is as follows. Component of the 17S U2 SnRNP complex of the spliceosome, a large ribonucleoprotein complex that removes introns from transcribed pre-mRNAs. The 17S U2 SnRNP complex (1) directly participates in early spliceosome assembly and (2) mediates recognition of the intron branch site during pre-mRNA splicing by promoting the selection of the pre-mRNA branch-site adenosine, the nucleophile for the first step of splicing. Within the 17S U2 SnRNP complex, PHF5A is part of the SF3B subcomplex, which is required for 'A' complex assembly formed by the stable binding of U2 snRNP to the branchpoint sequence in pre-mRNA. Sequence independent binding of SF3A and SF3B subcomplexes upstream of the branch site is essential, it may anchor U2 snRNP to the pre-mRNA. Also acts as a component of the minor spliceosome, which is involved in the splicing of U12-type introns in pre-mRNAs. Also involved in elongation by RNA polymerase II as part of the PAF1 complex (PAF1C). PAF1C is required for maintenance of embryonic stem cell (ESC) self-renewal and cellular reprogramming of stem cells. Maintains pluripotency by recruiting and stabilizing PAF1C on pluripotency genes loci, and by regulating the expression of the pluripotency genes. Regulates the deposition of elongation-associated histone modifications, including dimethylated histone H3 'Lys-79' (H3K79me2) and trimethylated histone H3 'Lys-36' (H3K36me3), on PAF1C targets, self-renewal and pluripotency genes. Regulates RNA polymerase II promoter-proximal pause release of the PAF1C targets and self-renewal genes, and the levels of elongating ('Ser-2' phosphorylated) RNA polymerase II in their gene bodies. Regulates muscle specification in adult stem cells by stabilizing PAF1C in chromatin to promote myogenic differentiation. Acts as a transcriptional regulator by binding to the GJA1/Cx43 promoter and enhancing its up-regulation by ESR1/ER-alpha. The sequence is that of PHD finger-like domain-containing protein 5A (Phf5a) from Mus musculus (Mouse).